Here is a 336-residue protein sequence, read N- to C-terminus: tRNA N6-adenosine threonylcarbamoyltransferase (336 aa).

Positions 114 and 118 each coordinate Fe cation. Substrate-binding positions include 136-140 (LVSGG), Asp-169, Gly-182, Asp-186, and Asn-275. Residue Asp-301 participates in Fe cation binding.

This sequence belongs to the KAE1 / TsaD family. Requires Fe(2+) as cofactor.

Its subcellular location is the cytoplasm. The enzyme catalyses L-threonylcarbamoyladenylate + adenosine(37) in tRNA = N(6)-L-threonylcarbamoyladenosine(37) in tRNA + AMP + H(+). Functionally, required for the formation of a threonylcarbamoyl group on adenosine at position 37 (t(6)A37) in tRNAs that read codons beginning with adenine. Is involved in the transfer of the threonylcarbamoyl moiety of threonylcarbamoyl-AMP (TC-AMP) to the N6 group of A37, together with TsaE and TsaB. TsaD likely plays a direct catalytic role in this reaction. This is tRNA N6-adenosine threonylcarbamoyltransferase from Streptococcus pneumoniae (strain JJA).